The sequence spans 203 residues: FMN-dependent NADH:quinone oxidoreductase (203 aa).

143–146 (SNGG) is a binding site for FMN.

It belongs to the azoreductase type 1 family. In terms of assembly, homodimer. Requires FMN as cofactor.

It carries out the reaction 2 a quinone + NADH + H(+) = 2 a 1,4-benzosemiquinone + NAD(+). The enzyme catalyses N,N-dimethyl-1,4-phenylenediamine + anthranilate + 2 NAD(+) = 2-(4-dimethylaminophenyl)diazenylbenzoate + 2 NADH + 2 H(+). Functionally, quinone reductase that provides resistance to thiol-specific stress caused by electrophilic quinones. Also exhibits azoreductase activity. Catalyzes the reductive cleavage of the azo bond in aromatic azo compounds to the corresponding amines. This chain is FMN-dependent NADH:quinone oxidoreductase, found in Streptococcus suis (strain 98HAH33).